The primary structure comprises 68 residues: Protein transport protein Sec61 subunit gamma (68 aa).

Residues 1–32 (MDQIMQFVEPSRQFVKDSIRLVKRCTKPDRKE) are Cytoplasmic-facing. The helical transmembrane segment at 33–61 (FQKIAMATAIGFAIMGFIGFFVKLIHIPI) threads the bilayer. The Extracellular segment spans residues 62–68 (NNIIVGG).

It belongs to the SecE/SEC61-gamma family. As to quaternary structure, the SEC61 channel-forming translocon complex consists of channel-forming core components SEC61A1, SEC61B and SEC61G and different auxiliary components such as SEC62 and SEC63. The SEC61 channel associates with the multi-pass translocon (MPT) complex.

It localises to the endoplasmic reticulum membrane. Component of SEC61 channel-forming translocon complex that mediates transport of signal peptide-containing precursor polypeptides across the endoplasmic reticulum (ER). Forms a ribosome receptor and a gated pore in the ER membrane, both functions required for cotranslational translocation of nascent polypeptides. The SEC61 channel is also involved in ER membrane insertion of transmembrane proteins: it mediates membrane insertion of the first few transmembrane segments of proteins, while insertion of subsequent transmembrane regions of multi-pass membrane proteins is mediated by the multi-pass translocon (MPT) complex. This chain is Protein transport protein Sec61 subunit gamma (sec61g), found in Gadus morhua (Atlantic cod).